A 344-amino-acid chain; its full sequence is Bifunctional trans-3-hydroxy-L-proline dehydratase/2-epimerase (344 aa).

Serine 90 (proton acceptor) is an active-site residue. Substrate is bound by residues 91–92, aspartate 252, and 257–258; these read GS and GT.

The protein belongs to the proline racemase family.

It catalyses the reaction trans-3-hydroxy-L-proline = 1-pyrroline-2-carboxylate + H2O. It carries out the reaction trans-3-hydroxy-L-proline = cis-3-hydroxy-D-proline. Functionally, bifunctional enzyme catalyzing both the dehydration of trans-3-hydroxy-L-proline (t3LHyp) to Delta(1)-pyrroline-2-carboxylate (Pyr2C) and 2-epimerization of t3LHyp to cis-3-hydroxy-D-proline (c3DHyp). No dehydratase activity with L-proline, trans-4-hydroxy-L-proline (t4LHyp), cis-4-hydroxy-L-proline (c4LHyp), D-proline, cis-4-hydroxy-D-proline (c4DHyp), trans-4-hydroxy-D-proline (t4DHyp) or L-serine as substrates. Displays neither t4LHyp epimerase nor proline racemase activity. Is likely involved in a degradation pathway that converts t3LHyp to L-proline, which would allow P.aeruginosa to grow on t3LHyp as a sole carbon source. The sequence is that of Bifunctional trans-3-hydroxy-L-proline dehydratase/2-epimerase from Pseudomonas aeruginosa (strain ATCC 15692 / DSM 22644 / CIP 104116 / JCM 14847 / LMG 12228 / 1C / PRS 101 / PAO1).